The sequence spans 309 residues: Movement protein (309 aa).

Positions 245-273 (HLSLNESKTLPSTSTTEAEGSERRIHIGA) are disordered. Polar residues predominate over residues 246-262 (LSLNESKTLPSTSTTEA).

Its subcellular location is the host cell junction. The protein resides in the host plasmodesma. Transports viral genome to neighboring plant cells directly through plasmosdesmata, without any budding. The movement protein allows efficient cell to cell propagation, by bypassing the host cell wall barrier. Acts by forming a tubular structure at the host plasmodesmata, enlarging it enough to allow free passage of virion capsids. This chain is Movement protein, found in Solanum lycopersicum (Tomato).